The following is a 401-amino-acid chain: Tyrosine--tRNA ligase (401 aa).

Residues 45-54 (PTAPDLHLGH) carry the 'HIGH' region motif. The 'KMSKS' region signature appears at 230-234 (KMSKS). An ATP-binding site is contributed by Lys-233. The S4 RNA-binding domain occupies 339-399 (IWLAKALVEC…GKRKFAKLKV (61 aa)).

This sequence belongs to the class-I aminoacyl-tRNA synthetase family. TyrS type 2 subfamily. As to quaternary structure, homodimer.

It localises to the cytoplasm. It catalyses the reaction tRNA(Tyr) + L-tyrosine + ATP = L-tyrosyl-tRNA(Tyr) + AMP + diphosphate + H(+). Functionally, catalyzes the attachment of tyrosine to tRNA(Tyr) in a two-step reaction: tyrosine is first activated by ATP to form Tyr-AMP and then transferred to the acceptor end of tRNA(Tyr). In Campylobacter jejuni (strain RM1221), this protein is Tyrosine--tRNA ligase.